A 678-amino-acid polypeptide reads, in one-letter code: MPRDKQKRGRRAEAKRKRDDVITDPTVLKRQKSSDVCNYPNPSYEQLEIRGDYIPLDEEPVDYTGTPFYGLLDIEEQEYFSHASGLLELNQFETEEEKSIFIERVYEEANGKELKIACSQSCSRLMEKLISASTVSQIKRLFSKFIGHFLNLVQHRFASHCCECLFIHAAQHVTSEMKKKSSKEKENLEEDSTSELQLEDLFLKAISELEGNWGYLLTERFASHTIRLLLLVLAGKPLRNSSTTTVIASRKKEYLASKVGTQLDPSISEKRAVPTSFNKALEKMMKDLVAGLDNTYLRALATHPVGNPVLQLLLSVELSHMGKSKAKDPDSLLRRLVPDENLQGDGESANFLKGLFYDPVGSRLLETIVQDAPGKFFRLFYKILVRERIGSFSRNEIAGHVVVRILERLSKDDLKSAMDMILPEVAPLVERSRLTVIKALIERGIVRGVDLGPLAAALLSAYGDDAVSRINNMLKLQRSNQESDGTTSSSNTSSPEQLHGSLLAQAMLKSTGPLSELVQSSLLAVTTETLISIAQDPVVSHVLQDALTLPTSTPQFRRQITSRFSGKIAELALHSSGSHVVDALWPATKDLLFVKQRFAEELVVHERALRDSFVGRAVWRNWSMDLYKRKRGSWIAIAKGLEDSTDINPNALTHKPKSNIDLARARFAAKANGSKAPS.

The span at 1–15 (MPRDKQKRGRRAEAK) shows a compositional bias: basic residues. The interval 1–24 (MPRDKQKRGRRAEAKRKRDDVITD) is disordered. 3 Pumilio repeats span residues 108 to 143 (EANGKELKIACSQSCSRLMEKLISASTVSQIKRLFS), 291 to 334 (GLDN…SLLR), and 382 to 419 (KILVRERIGSFSRNEIAGHVVVRILERLSKDDLKSAMD). The tract at residues 477–496 (QRSNQESDGTTSSSNTSSPE) is disordered. Pumilio repeat units follow at residues 524–562 (AVTTETLISIAQDPVVSHVLQDALTLPTSTPQFRRQITS) and 563–600 (RFSGKIAELALHSSGSHVVDALWPATKDLLFVKQRFAE).

It is found in the nucleus. The protein resides in the nucleolus. RNA-binding nucleolar protein required for pre-rRNA processing. Involved in production of 18S rRNA and assembly of small ribosomal subunit. This chain is Nucleolar protein 9 (NOP9), found in Paracoccidioides brasiliensis (strain Pb18).